Reading from the N-terminus, the 328-residue chain is Cell division protein ZipA (328 aa).

Over 1–6 the chain is Periplasmic; sequence MMQDLR. A helical membrane pass occupies residues 7–27; that stretch reads LILIVVGAIAIIALLLHGLWT. The Cytoplasmic segment spans residues 28-328; the sequence is SRKERSSLFR…REVLDANTIA (301 aa). Over residues 61–72 the composition is skewed to basic and acidic residues; it reads GEVRVRTSHPQE. Residues 61 to 183 form a disordered region; the sequence is GEVRVRTSHP…EPVAPAPEAK (123 aa). Polar residues-rich tracts occupy residues 95–104 and 164–174; these read KSAQVKTASR and APQQHVESQQE.

Belongs to the ZipA family. Interacts with FtsZ via their C-terminal domains.

It localises to the cell inner membrane. Functionally, essential cell division protein that stabilizes the FtsZ protofilaments by cross-linking them and that serves as a cytoplasmic membrane anchor for the Z ring. Also required for the recruitment to the septal ring of downstream cell division proteins. This chain is Cell division protein ZipA, found in Yersinia pestis bv. Antiqua (strain Antiqua).